The chain runs to 312 residues: DNA-directed RNA polymerase subunit alpha (312 aa).

Residues 1 to 226 (MIEFEKPRIE…EHLDIFVNLT (226 aa)) form an alpha N-terminal domain (alpha-NTD) region. An alpha C-terminal domain (alpha-CTD) region spans residues 243–312 (KEKMLEMTIE…DLGLGLRKDD (70 aa)).

This sequence belongs to the RNA polymerase alpha chain family. In terms of assembly, homodimer. The RNAP catalytic core consists of 2 alpha, 1 beta, 1 beta' and 1 omega subunit. When a sigma factor is associated with the core the holoenzyme is formed, which can initiate transcription.

It catalyses the reaction RNA(n) + a ribonucleoside 5'-triphosphate = RNA(n+1) + diphosphate. Its function is as follows. DNA-dependent RNA polymerase catalyzes the transcription of DNA into RNA using the four ribonucleoside triphosphates as substrates. The polypeptide is DNA-directed RNA polymerase subunit alpha (Enterococcus faecalis (strain ATCC 700802 / V583)).